The primary structure comprises 565 residues: Proline--tRNA ligase (565 aa).

The protein belongs to the class-II aminoacyl-tRNA synthetase family. ProS type 1 subfamily. As to quaternary structure, homodimer.

Its subcellular location is the cytoplasm. It catalyses the reaction tRNA(Pro) + L-proline + ATP = L-prolyl-tRNA(Pro) + AMP + diphosphate. Its function is as follows. Catalyzes the attachment of proline to tRNA(Pro) in a two-step reaction: proline is first activated by ATP to form Pro-AMP and then transferred to the acceptor end of tRNA(Pro). As ProRS can inadvertently accommodate and process non-cognate amino acids such as alanine and cysteine, to avoid such errors it has two additional distinct editing activities against alanine. One activity is designated as 'pretransfer' editing and involves the tRNA(Pro)-independent hydrolysis of activated Ala-AMP. The other activity is designated 'posttransfer' editing and involves deacylation of mischarged Ala-tRNA(Pro). The misacylated Cys-tRNA(Pro) is not edited by ProRS. This is Proline--tRNA ligase from Francisella tularensis subsp. novicida (strain U112).